The sequence spans 191 residues: Protein GrpE (191 aa).

It belongs to the GrpE family. In terms of assembly, homodimer.

The protein resides in the cytoplasm. Its function is as follows. Participates actively in the response to hyperosmotic and heat shock by preventing the aggregation of stress-denatured proteins, in association with DnaK and GrpE. It is the nucleotide exchange factor for DnaK and may function as a thermosensor. Unfolded proteins bind initially to DnaJ; upon interaction with the DnaJ-bound protein, DnaK hydrolyzes its bound ATP, resulting in the formation of a stable complex. GrpE releases ADP from DnaK; ATP binding to DnaK triggers the release of the substrate protein, thus completing the reaction cycle. Several rounds of ATP-dependent interactions between DnaJ, DnaK and GrpE are required for fully efficient folding. The sequence is that of Protein GrpE from Listeria monocytogenes serotype 1/2a (strain 10403S).